The following is a 500-amino-acid chain: Na(+)/H(+) antiporter NhaB (500 aa).

13 helical membrane passes run 11 to 31, 34 to 54, 58 to 78, 96 to 116, 129 to 149, 150 to 170, 205 to 225, 241 to 261, 311 to 331, 350 to 370, 394 to 414, 450 to 470, and 477 to 497; these read HGFL…FLVL, LLLV…EFIF, MALK…ALLL, VILL…LLLF, AILS…LDAL, TVTA…HRVA, LLMH…VGEP, FFFK…LTCV, ILII…LMVI, FQDA…VAVI, MLYL…VATI, ATPN…APLI, and MVWM…WAVT.

This sequence belongs to the NhaB Na(+)/H(+) (TC 2.A.34) antiporter family.

The protein localises to the cell inner membrane. The enzyme catalyses 2 Na(+)(in) + 3 H(+)(out) = 2 Na(+)(out) + 3 H(+)(in). Functionally, na(+)/H(+) antiporter that extrudes sodium in exchange for external protons. This Pseudomonas putida (strain GB-1) protein is Na(+)/H(+) antiporter NhaB.